A 1060-amino-acid chain; its full sequence is DNA-directed RNA polymerase subunit beta (1060 aa).

The protein belongs to the RNA polymerase beta chain family. In plastids the minimal PEP RNA polymerase catalytic core is composed of four subunits: alpha, beta, beta', and beta''. When a (nuclear-encoded) sigma factor is associated with the core the holoenzyme is formed, which can initiate transcription.

The protein resides in the plastid. It is found in the chloroplast. It catalyses the reaction RNA(n) + a ribonucleoside 5'-triphosphate = RNA(n+1) + diphosphate. In terms of biological role, DNA-dependent RNA polymerase catalyzes the transcription of DNA into RNA using the four ribonucleoside triphosphates as substrates. The protein is DNA-directed RNA polymerase subunit beta of Helianthus annuus (Common sunflower).